We begin with the raw amino-acid sequence, 143 residues long: Ribosome-binding factor A (143 aa).

The segment at 117 to 143 (DAEIARRSQGAMPAGEADPYRHSDEEE) is disordered. Positions 134-143 (DPYRHSDEEE) are enriched in basic and acidic residues.

The protein belongs to the RbfA family. Monomer. Binds 30S ribosomal subunits, but not 50S ribosomal subunits or 70S ribosomes.

Its subcellular location is the cytoplasm. One of several proteins that assist in the late maturation steps of the functional core of the 30S ribosomal subunit. Associates with free 30S ribosomal subunits (but not with 30S subunits that are part of 70S ribosomes or polysomes). Required for efficient processing of 16S rRNA. May interact with the 5'-terminal helix region of 16S rRNA. The sequence is that of Ribosome-binding factor A from Cutibacterium acnes (strain DSM 16379 / KPA171202) (Propionibacterium acnes).